A 218-amino-acid polypeptide reads, in one-letter code: ATP-dependent Clp protease proteolytic subunit 2 (218 aa).

Serine 114 serves as the catalytic Nucleophile. Histidine 139 is an active-site residue.

This sequence belongs to the peptidase S14 family. In terms of assembly, fourteen ClpP subunits assemble into 2 heptameric rings which stack back to back to give a disk-like structure with a central cavity, resembling the structure of eukaryotic proteasomes.

The protein localises to the cytoplasm. It catalyses the reaction Hydrolysis of proteins to small peptides in the presence of ATP and magnesium. alpha-casein is the usual test substrate. In the absence of ATP, only oligopeptides shorter than five residues are hydrolyzed (such as succinyl-Leu-Tyr-|-NHMec, and Leu-Tyr-Leu-|-Tyr-Trp, in which cleavage of the -Tyr-|-Leu- and -Tyr-|-Trp bonds also occurs).. In terms of biological role, cleaves peptides in various proteins in a process that requires ATP hydrolysis. Has a chymotrypsin-like activity. Plays a major role in the degradation of misfolded proteins. Probably partially responsible for degradation of ECF sigma factor SigR prime. In Streptomyces coelicolor (strain ATCC BAA-471 / A3(2) / M145), this protein is ATP-dependent Clp protease proteolytic subunit 2.